Reading from the N-terminus, the 443-residue chain is Xaa-Pro dipeptidase (443 aa).

The Mn(2+) site is built by D246, D257, H339, E384, and E423.

It belongs to the peptidase M24B family. Bacterial-type prolidase subfamily. Mn(2+) serves as cofactor.

It catalyses the reaction Xaa-L-Pro dipeptide + H2O = an L-alpha-amino acid + L-proline. In terms of biological role, splits dipeptides with a prolyl residue in the C-terminal position. This is Xaa-Pro dipeptidase from Escherichia coli O8 (strain IAI1).